Consider the following 207-residue polypeptide: Thiamine-phosphate synthase (207 aa).

4-amino-2-methyl-5-(diphosphooxymethyl)pyrimidine-binding positions include 36–40 (QLRIK) and Asp-68. Mg(2+) contacts are provided by Asp-69 and Asp-88. Residue Ser-106 participates in 4-amino-2-methyl-5-(diphosphooxymethyl)pyrimidine binding. 132-134 (TKT) lines the 2-[(2R,5Z)-2-carboxy-4-methylthiazol-5(2H)-ylidene]ethyl phosphate pocket. Lys-135 contributes to the 4-amino-2-methyl-5-(diphosphooxymethyl)pyrimidine binding site. Residues Gly-162 and 182–183 (VS) each bind 2-[(2R,5Z)-2-carboxy-4-methylthiazol-5(2H)-ylidene]ethyl phosphate.

Belongs to the thiamine-phosphate synthase family. Mg(2+) serves as cofactor.

It catalyses the reaction 2-[(2R,5Z)-2-carboxy-4-methylthiazol-5(2H)-ylidene]ethyl phosphate + 4-amino-2-methyl-5-(diphosphooxymethyl)pyrimidine + 2 H(+) = thiamine phosphate + CO2 + diphosphate. The catalysed reaction is 2-(2-carboxy-4-methylthiazol-5-yl)ethyl phosphate + 4-amino-2-methyl-5-(diphosphooxymethyl)pyrimidine + 2 H(+) = thiamine phosphate + CO2 + diphosphate. The enzyme catalyses 4-methyl-5-(2-phosphooxyethyl)-thiazole + 4-amino-2-methyl-5-(diphosphooxymethyl)pyrimidine + H(+) = thiamine phosphate + diphosphate. It functions in the pathway cofactor biosynthesis; thiamine diphosphate biosynthesis; thiamine phosphate from 4-amino-2-methyl-5-diphosphomethylpyrimidine and 4-methyl-5-(2-phosphoethyl)-thiazole: step 1/1. In terms of biological role, condenses 4-methyl-5-(beta-hydroxyethyl)thiazole monophosphate (THZ-P) and 2-methyl-4-amino-5-hydroxymethyl pyrimidine pyrophosphate (HMP-PP) to form thiamine monophosphate (TMP). In Pyrococcus abyssi (strain GE5 / Orsay), this protein is Thiamine-phosphate synthase.